The following is a 442-amino-acid chain: ATP-dependent protease ATPase subunit HslU (442 aa).

ATP contacts are provided by residues Ile18 and 60 to 65 (GVGKTE). The segment at 133 to 156 (DALLPKPKNDWDNTDSDTSSNTRQ) is disordered. ATP-binding residues include Asp255, Glu320, and Arg392.

The protein belongs to the ClpX chaperone family. HslU subfamily. A double ring-shaped homohexamer of HslV is capped on each side by a ring-shaped HslU homohexamer. The assembly of the HslU/HslV complex is dependent on binding of ATP.

It is found in the cytoplasm. In terms of biological role, ATPase subunit of a proteasome-like degradation complex; this subunit has chaperone activity. The binding of ATP and its subsequent hydrolysis by HslU are essential for unfolding of protein substrates subsequently hydrolyzed by HslV. HslU recognizes the N-terminal part of its protein substrates and unfolds these before they are guided to HslV for hydrolysis. This chain is ATP-dependent protease ATPase subunit HslU, found in Shewanella sp. (strain ANA-3).